The following is a 176-amino-acid chain: Inner membrane assembly complex subunit 17 (176 aa).

A mitochondrion-targeting transit peptide spans M1–V28. Residues Y29–F98 lie on the Mitochondrial matrix side of the membrane. A helical membrane pass occupies residues V99–W121. Residues K122–F176 are Mitochondrial intermembrane-facing. Residues L123–N151 are a coiled coil. A compositionally biased stretch (low complexity) spans S149–N163. The segment at S149–K168 is disordered.

It belongs to the INA17 family. In terms of assembly, component of the inner membrane assembly (INA) complex, composed of INA17 and INA22. Interacts with a subset of F(1)F(0)-ATP synthase subunits of the F(1)-domain and the peripheral stalk.

Its subcellular location is the mitochondrion inner membrane. In terms of biological role, component of the INA complex (INAC) that promotes the biogenesis of mitochondrial F(1)F(0)-ATP synthase. INAC facilitates the assembly of the peripheral stalk and promotes the assembly of the catalytic F(1)-domain with the membrane-embedded F(0)-domain. In Zygosaccharomyces rouxii (strain ATCC 2623 / CBS 732 / NBRC 1130 / NCYC 568 / NRRL Y-229), this protein is Inner membrane assembly complex subunit 17.